The chain runs to 200 residues: GTP cyclohydrolase-2 (200 aa).

Arginine 49–glutamate 53 is a GTP binding site. Positions 54, 65, and 67 each coordinate Zn(2+). GTP-binding positions include glutamine 70, glutamate 92–arginine 94, and threonine 114. Catalysis depends on aspartate 126, which acts as the Proton acceptor. The Nucleophile role is filled by arginine 128. GTP contacts are provided by threonine 149 and lysine 154.

This sequence belongs to the GTP cyclohydrolase II family. In terms of assembly, homodimer. Requires Zn(2+) as cofactor.

The catalysed reaction is GTP + 4 H2O = 2,5-diamino-6-hydroxy-4-(5-phosphoribosylamino)-pyrimidine + formate + 2 phosphate + 3 H(+). Its pathway is cofactor biosynthesis; riboflavin biosynthesis; 5-amino-6-(D-ribitylamino)uracil from GTP: step 1/4. In terms of biological role, catalyzes the conversion of GTP to 2,5-diamino-6-ribosylamino-4(3H)-pyrimidinone 5'-phosphate (DARP), formate and pyrophosphate. The sequence is that of GTP cyclohydrolase-2 from Klebsiella pneumoniae subsp. pneumoniae (strain ATCC 700721 / MGH 78578).